A 251-amino-acid polypeptide reads, in one-letter code: uncharacterized protein (251 aa).

The region spanning 3 to 58 is the HTH deoR-type domain; it reads TPERHQLIIDQIEKHDVVKIQELINLTNASESTIRRDLSTLEERGFLKRVHGGAAK. A DNA-binding region (H-T-H motif) is located at residues 20-39; that stretch reads VKIQELINLTNASESTIRRD.

This is an uncharacterized protein from Bacillus subtilis (strain 168).